A 108-amino-acid chain; its full sequence is Protein phosphatase 1 regulatory subunit 1C (108 aa).

Positions 25–108 (AEQIRKRRPT…ASEREEKWNH (84 aa)) are disordered. The segment covering 45-54 (NSPEIDEKRV) has biased composition (basic and acidic residues). Residues 55–73 (TNTQESQNASPKQRKQSVY) show a composition bias toward polar residues. Residues 99 to 108 (ASEREEKWNH) are compositionally biased toward basic and acidic residues.

Belongs to the protein phosphatase inhibitor 1 family.

Its subcellular location is the cytoplasm. Its function is as follows. May increase cell susceptibility to TNF-induced apoptosis. In Mus musculus (Mouse), this protein is Protein phosphatase 1 regulatory subunit 1C (Ppp1r1c).